Here is a 393-residue protein sequence, read N- to C-terminus: Lipid-A-disaccharide synthase (393 aa).

It belongs to the LpxB family.

The catalysed reaction is a lipid X + a UDP-2-N,3-O-bis[(3R)-3-hydroxyacyl]-alpha-D-glucosamine = a lipid A disaccharide + UDP + H(+). The protein operates within bacterial outer membrane biogenesis; LPS lipid A biosynthesis. Functionally, condensation of UDP-2,3-diacylglucosamine and 2,3-diacylglucosamine-1-phosphate to form lipid A disaccharide, a precursor of lipid A, a phosphorylated glycolipid that anchors the lipopolysaccharide to the outer membrane of the cell. The sequence is that of Lipid-A-disaccharide synthase from Rhodopseudomonas palustris (strain HaA2).